The primary structure comprises 60 residues: Large ribosomal subunit protein uL30 (60 aa).

The protein belongs to the universal ribosomal protein uL30 family. Part of the 50S ribosomal subunit.

This chain is Large ribosomal subunit protein uL30, found in Bacillus mycoides (strain KBAB4) (Bacillus weihenstephanensis).